We begin with the raw amino-acid sequence, 301 residues long: Large ribosomal subunit protein uL18 (301 aa).

This sequence belongs to the universal ribosomal protein uL18 family. In terms of assembly, component of the large ribosomal subunit (LSU). Mature N.crassa ribosomes consist of a small (40S) and a large (60S) subunit. The 40S small subunit contains 1 molecule of ribosomal RNA (18S rRNA) and at least 32 different proteins. The large 60S subunit contains 3 rRNA molecules (26S, 5.8S and 5S rRNA) and at least 42 different proteins.

The protein resides in the cytoplasm. In terms of biological role, component of the ribosome, a large ribonucleoprotein complex responsible for the synthesis of proteins in the cell. The small ribosomal subunit (SSU) binds messenger RNAs (mRNAs) and translates the encoded message by selecting cognate aminoacyl-transfer RNA (tRNA) molecules. The large subunit (LSU) contains the ribosomal catalytic site termed the peptidyl transferase center (PTC), which catalyzes the formation of peptide bonds, thereby polymerizing the amino acids delivered by tRNAs into a polypeptide chain. The nascent polypeptides leave the ribosome through a tunnel in the LSU and interact with protein factors that function in enzymatic processing, targeting, and the membrane insertion of nascent chains at the exit of the ribosomal tunnel. The polypeptide is Large ribosomal subunit protein uL18 (rpl-5) (Neurospora crassa (strain ATCC 24698 / 74-OR23-1A / CBS 708.71 / DSM 1257 / FGSC 987)).